The sequence spans 345 residues: Protein sdf-9 (345 aa).

The Tyrosine-protein phosphatase domain maps to 33–284 (NRNRVVKIVP…SFIYEAVLDY (252 aa)).

The protein belongs to the protein-tyrosine phosphatase family. Expressed in the 2 embryonic head hypodermal cells XXXL/R.

Its subcellular location is the cytoplasm. It localises to the cell membrane. Its function is as follows. Together with eak-4 and phosphatase eak-6, negatively regulates dauer larva formation downstream of insulin-like receptor daf-2 and in parallel of age-1, pdk-1 and akt-1. This chain is Protein sdf-9, found in Caenorhabditis elegans.